A 377-amino-acid polypeptide reads, in one-letter code: Interferon gamma receptor 1 (377 aa).

The N-terminal stretch at 1 to 23 (MRTQIYISVTVLILLLKKSDLEA) is a signal peptide. Topologically, residues 24-235 (VRVPSPESVS…IRRYTPFTVY (212 aa)) are extracellular. The Fibronectin type-III domain occupies 26-117 (VPSPESVSVQ…DFFIFSFNEN (92 aa)). N-linked (GlcNAc...) asparagine glycans are attached at residues N78 and N186. The chain crosses the membrane as a helical span at residues 236–256 (LYPVLGVTLTLLFITGIIILL). The Cytoplasmic portion of the chain corresponds to 257–377 (EKKCNSEMKK…TVDSYGPRLL (121 aa)). The interval 326–377 (VYSEDKNSYGPNDLVEDEQSDLSDFYDCPHAPKQKREMSPGDTVDSYGPRLL) is disordered.

It belongs to the type II cytokine receptor family. As to expression, highly expressed in spleen. Also detected in brain, kidney, gill, intestine and heart. Expressed at very low levels in muscle. In immune cell populations, shows highest expression in monocytes, and slightly lower expression in peripheral blood leukocytes, splenocytes, neutrophils and mature macrophages.

The protein localises to the cell membrane. In terms of biological role, receptor which shows binding specificity for the cytokine ifng1r (interferon gamma-related). The chain is Interferon gamma receptor 1 from Carassius auratus (Goldfish).